A 499-amino-acid polypeptide reads, in one-letter code: Probable dipeptidase B (499 aa).

Residue C26 is part of the active site.

This sequence belongs to the peptidase C69 family.

It catalyses the reaction an L-aminoacyl-L-amino acid + H2O = 2 an L-alpha-amino acid. The chain is Probable dipeptidase B (pepDB) from Streptococcus pyogenes serotype M18 (strain MGAS8232).